The sequence spans 306 residues: Palmitoyl-protein thioesterase 1 (306 aa).

Residues 1-27 (MASSSCLWLLALAFLLGSCASLALGHL) form the signal peptide. 3 cysteine pairs are disulfide-bonded: Cys-45-Cys-46, Cys-96-Cys-128, and Cys-152-Cys-160. Ser-115 is a catalytic residue. 3 N-linked (GlcNAc...) asparagine glycosylation sites follow: Asn-197, Asn-212, and Asn-232. Active-site residues include Asp-233 and His-289.

It belongs to the palmitoyl-protein thioesterase family. Interacts with CLN5, ATP5F1A and ATP5F1B. Glycosylated. Spleen, brain, seminal vesicle, and testis. Lower levels of activity in liver, heart, lung, and skeletal muscle.

It is found in the lysosome. The protein resides in the secreted. It localises to the golgi apparatus. The protein localises to the endoplasmic reticulum. It catalyses the reaction S-hexadecanoyl-L-cysteinyl-[protein] + H2O = L-cysteinyl-[protein] + hexadecanoate + H(+). It carries out the reaction hexadecanoyl-CoA + H2O = hexadecanoate + CoA + H(+). The catalysed reaction is S-hexadecanoyl-N-acetylcysteamine + H2O = N-acetylcysteamine + hexadecanoate + H(+). The enzyme catalyses S-hexadecanoyl-N-acetylcysteine methyl ester + H2O = N-acetylcysteine methyl ester + hexadecanoate + H(+). With respect to regulation, palmitoylation reduces PPT1 enzymatic activity. Functionally, has thioesterase activity against fatty acid thioesters with 14 -18 carbons, including palmitoyl-CoA, S-palmitoyl-N-acetylcysteamine, and palmitoylated proteins. In contrast to PPT2, PPT1 can hydrolyze palmitoylated proteins and palmitoylcysteine. This Bos taurus (Bovine) protein is Palmitoyl-protein thioesterase 1 (PPT1).